A 98-amino-acid chain; its full sequence is Cell division topological specificity factor (98 aa).

It belongs to the MinE family.

Functionally, prevents the cell division inhibition by proteins MinC and MinD at internal division sites while permitting inhibition at polar sites. This ensures cell division at the proper site by restricting the formation of a division septum at the midpoint of the long axis of the cell. This Nitrosomonas eutropha (strain DSM 101675 / C91 / Nm57) protein is Cell division topological specificity factor.